We begin with the raw amino-acid sequence, 158 residues long: NAD(P)H-quinone oxidoreductase subunit J, chloroplastic (158 aa).

The protein belongs to the complex I 30 kDa subunit family. NDH is composed of at least 16 different subunits, 5 of which are encoded in the nucleus.

The protein localises to the plastid. The protein resides in the chloroplast thylakoid membrane. The catalysed reaction is a plastoquinone + NADH + (n+1) H(+)(in) = a plastoquinol + NAD(+) + n H(+)(out). The enzyme catalyses a plastoquinone + NADPH + (n+1) H(+)(in) = a plastoquinol + NADP(+) + n H(+)(out). In terms of biological role, NDH shuttles electrons from NAD(P)H:plastoquinone, via FMN and iron-sulfur (Fe-S) centers, to quinones in the photosynthetic chain and possibly in a chloroplast respiratory chain. The immediate electron acceptor for the enzyme in this species is believed to be plastoquinone. Couples the redox reaction to proton translocation, and thus conserves the redox energy in a proton gradient. This chain is NAD(P)H-quinone oxidoreductase subunit J, chloroplastic, found in Ranunculus macranthus (Large buttercup).